A 260-amino-acid chain; its full sequence is 5'-nucleotidase SurE (260 aa).

A divalent metal cation is bound by residues Asp-19, Asp-20, Ser-51, and Asn-104.

This sequence belongs to the SurE nucleotidase family. A divalent metal cation serves as cofactor.

The protein localises to the cytoplasm. The catalysed reaction is a ribonucleoside 5'-phosphate + H2O = a ribonucleoside + phosphate. Its function is as follows. Nucleotidase that shows phosphatase activity on nucleoside 5'-monophosphates. The chain is 5'-nucleotidase SurE from Paramagnetospirillum magneticum (strain ATCC 700264 / AMB-1) (Magnetospirillum magneticum).